The sequence spans 396 residues: Ribosomal RNA small subunit methyltransferase H (396 aa).

S-adenosyl-L-methionine is bound by residues 101–103 (GGH), D120, Y147, D171, and Q178.

It belongs to the methyltransferase superfamily. RsmH family.

The protein resides in the cytoplasm. The enzyme catalyses cytidine(1402) in 16S rRNA + S-adenosyl-L-methionine = N(4)-methylcytidine(1402) in 16S rRNA + S-adenosyl-L-homocysteine + H(+). In terms of biological role, specifically methylates the N4 position of cytidine in position 1402 (C1402) of 16S rRNA. This chain is Ribosomal RNA small subunit methyltransferase H, found in Mycobacterium bovis (strain ATCC BAA-935 / AF2122/97).